A 463-amino-acid chain; its full sequence is Tryptophan aminotransferase-related protein 4 (463 aa).

The chain crosses the membrane as a helical span at residues 6-26 (LLLIVSIILNLVFTIHILYYS). Pyridoxal 5'-phosphate is bound by residues Tyr124, 163 to 164 (TT), Asn239, 259 to 262 (DYAY), 282 to 285 (SLSK), and Arg293. Lys285 is subject to N6-(pyridoxal phosphate)lysine.

The protein belongs to the alliinase family. It depends on pyridoxal 5'-phosphate as a cofactor.

The protein resides in the membrane. Functionally, probable aminotransferase. This Arabidopsis thaliana (Mouse-ear cress) protein is Tryptophan aminotransferase-related protein 4 (TAR4).